Consider the following 307-residue polypeptide: Putative S-adenosyl-L-methionine-dependent methyltransferase Mflv_5023 (307 aa).

S-adenosyl-L-methionine-binding positions include Asp133 and 162 to 163; that span reads DL. A disordered region spans residues 213–234; it reads SRLAVESVPSQQSADQDEMREK.

This sequence belongs to the UPF0677 family.

In terms of biological role, exhibits S-adenosyl-L-methionine-dependent methyltransferase activity. The polypeptide is Putative S-adenosyl-L-methionine-dependent methyltransferase Mflv_5023 (Mycolicibacterium gilvum (strain PYR-GCK) (Mycobacterium gilvum (strain PYR-GCK))).